The following is a 218-amino-acid chain: Probable nicotinate-nucleotide adenylyltransferase (218 aa).

It belongs to the NadD family.

The enzyme catalyses nicotinate beta-D-ribonucleotide + ATP + H(+) = deamido-NAD(+) + diphosphate. The protein operates within cofactor biosynthesis; NAD(+) biosynthesis; deamido-NAD(+) from nicotinate D-ribonucleotide: step 1/1. Catalyzes the reversible adenylation of nicotinate mononucleotide (NaMN) to nicotinic acid adenine dinucleotide (NaAD). This Corynebacterium glutamicum (strain ATCC 13032 / DSM 20300 / JCM 1318 / BCRC 11384 / CCUG 27702 / LMG 3730 / NBRC 12168 / NCIMB 10025 / NRRL B-2784 / 534) protein is Probable nicotinate-nucleotide adenylyltransferase.